Consider the following 336-residue polypeptide: Ornithine carbamoyltransferase (336 aa).

Carbamoyl phosphate is bound by residues 56–59, Gln-83, Arg-107, and 134–137; these read STRT and HPTQ. Residues Asn-168, Asp-232, and 236-237 each bind L-ornithine; that span reads SM. Carbamoyl phosphate-binding positions include 274-275 and Arg-320; that span reads CL.

The protein belongs to the aspartate/ornithine carbamoyltransferase superfamily. OTCase family.

Its subcellular location is the cytoplasm. The catalysed reaction is carbamoyl phosphate + L-ornithine = L-citrulline + phosphate + H(+). It functions in the pathway amino-acid biosynthesis; L-arginine biosynthesis; L-arginine from L-ornithine and carbamoyl phosphate: step 1/3. Its function is as follows. Reversibly catalyzes the transfer of the carbamoyl group from carbamoyl phosphate (CP) to the N(epsilon) atom of ornithine (ORN) to produce L-citrulline. In Erwinia tasmaniensis (strain DSM 17950 / CFBP 7177 / CIP 109463 / NCPPB 4357 / Et1/99), this protein is Ornithine carbamoyltransferase.